The primary structure comprises 95 residues: Co-chaperonin GroES (95 aa).

It belongs to the GroES chaperonin family. In terms of assembly, heptamer of 7 subunits arranged in a ring. Interacts with the chaperonin GroEL.

The protein localises to the cytoplasm. In terms of biological role, together with the chaperonin GroEL, plays an essential role in assisting protein folding. The GroEL-GroES system forms a nano-cage that allows encapsulation of the non-native substrate proteins and provides a physical environment optimized to promote and accelerate protein folding. GroES binds to the apical surface of the GroEL ring, thereby capping the opening of the GroEL channel. This chain is Co-chaperonin GroES, found in Bordetella petrii (strain ATCC BAA-461 / DSM 12804 / CCUG 43448).